We begin with the raw amino-acid sequence, 387 residues long: Lactosylceramide alpha-2,3-sialyltransferase (387 aa).

At 1 to 33 (MPNEFTSAKLRSDCSRTSLQWYTQTQHKMRRPS) the chain is on the cytoplasmic side. A helical; Signal-anchor for type II membrane protein membrane pass occupies residues 34 to 54 (LLLKDILKCMLVVFGVWLLYI). Topologically, residues 55 to 387 (LKLNYTAEEC…VVQDLSGGIH (333 aa)) are extracellular. N-linked (GlcNAc...) asparagine glycans are attached at residues Asn-58 and Asn-208. A disulfide bond links Cys-167 and Cys-325.

Belongs to the glycosyltransferase 29 family.

It is found in the golgi apparatus membrane. The catalysed reaction is a beta-D-Gal-(1-&gt;4)-beta-D-Glc-(1&lt;-&gt;1)-Cer(d18:1(4E)) + CMP-N-acetyl-beta-neuraminate = a ganglioside GM3 (d18:1(4E)) + CMP + H(+). The enzyme catalyses ganglioside GA2 (d18:1(4E)/18:0) + CMP-N-acetyl-beta-neuraminate = ganglioside GM2 (d18:1(4E)/18:0) + CMP + H(+). It carries out the reaction a beta-D-Gal-(1&lt;-&gt;1')-ceramide + CMP-N-acetyl-beta-neuraminate = N-acetyl-alpha-neuraminosyl-(2-&gt;3)-beta-D-galactosyl-(1&lt;-&gt;1')-ceramide + CMP + H(+). It catalyses the reaction ganglioside GA1 (d18:1(4E)/18:0) + CMP-N-acetyl-beta-neuraminate = ganglioside GM1 (d18:1(4E)/18:0) + CMP + H(+). In terms of biological role, transfers the sialyl group (N-acetyl-alpha-neuraminyl or NeuAc) from CMP-NeuAc to the non-reducing terminal galactose (Gal) of glycosphingolipids forming gangliosides (important molecules involved in the regulation of multiple cellular processes, including cell proliferation and differentiation, apoptosis, embryogenesis, development, and oncogenesis). Mainly involved in the biosynthesis of ganglioside GM3 but can also use different glycolipids as substrate acceptors such as D-galactosylceramide (GalCer), asialo-GM2 (GA2) and asialo-GM1 (GA1), although less preferentially than beta-D-Gal-(1-&gt;4)-beta-D-Glc-(1&lt;-&gt;1)-Cer (LacCer). In Rattus norvegicus (Rat), this protein is Lactosylceramide alpha-2,3-sialyltransferase (St3gal5).